We begin with the raw amino-acid sequence, 203 residues long: Outer-membrane lipoprotein carrier protein (203 aa).

The N-terminal stretch at 1 to 20 is a signal peptide; it reads MRRGRVWLAALCLAAGAAHA.

It belongs to the LolA family. In terms of assembly, monomer.

It localises to the periplasm. Functionally, participates in the translocation of lipoproteins from the inner membrane to the outer membrane. Only forms a complex with a lipoprotein if the residue after the N-terminal Cys is not an aspartate (The Asp acts as a targeting signal to indicate that the lipoprotein should stay in the inner membrane). The protein is Outer-membrane lipoprotein carrier protein of Methylibium petroleiphilum (strain ATCC BAA-1232 / LMG 22953 / PM1).